Here is a 314-residue protein sequence, read N- to C-terminus: Methionyl-tRNA formyltransferase (314 aa).

Ser112–Pro115 lines the (6S)-5,6,7,8-tetrahydrofolate pocket.

The protein belongs to the Fmt family.

The catalysed reaction is L-methionyl-tRNA(fMet) + (6R)-10-formyltetrahydrofolate = N-formyl-L-methionyl-tRNA(fMet) + (6S)-5,6,7,8-tetrahydrofolate + H(+). Functionally, attaches a formyl group to the free amino group of methionyl-tRNA(fMet). The formyl group appears to play a dual role in the initiator identity of N-formylmethionyl-tRNA by promoting its recognition by IF2 and preventing the misappropriation of this tRNA by the elongation apparatus. This chain is Methionyl-tRNA formyltransferase, found in Legionella pneumophila (strain Paris).